A 1757-amino-acid polypeptide reads, in one-letter code: 1-phosphatidylinositol-3-phosphate 5-kinase FAB1A (1757 aa).

The FYVE-type zinc finger occupies 36–102 (DQSCPVCYEC…VCNYCYKQWE (67 aa)). Zn(2+) is bound by residues C42, C45, C58, C61, C66, C69, C94, and C97. 4 disordered regions span residues 125-193 (ARSV…SDNQ), 276-297 (KTRQ…CEES), 313-346 (LPPE…YLRP), and 684-709 (AEKS…NFTS). Polar residues predominate over residues 134–145 (NSSNCTIDSTAG). A compositionally biased stretch (acidic residues) spans 317–337 (PENEEDEREAVLSDDDGDEGD). A coiled-coil region spans residues 1014–1087 (LQKESKEVIK…LQQMLNVVKD (74 aa)). The PIPK domain occupies 1395-1719 (SFSLFDSVNL…RFRKAMTAYF (325 aa)). Low complexity predominate over residues 1729–1739 (AAVVPSNSSSA). Positions 1729–1757 (AAVVPSNSSSAEVKEEEEKDNPQAVGNKS) are disordered.

Component of the PI(3,5)P2 regulatory complex at least composed of ATG18, SAC/FIG4, FAB1 and VAC14. It depends on Mg(2+) as a cofactor. Requires Mn(2+) as cofactor. In terms of tissue distribution, ubiquitous with highest expression levels in pollen, seed, and senescent leaves.

The protein localises to the endosome membrane. It carries out the reaction a 1,2-diacyl-sn-glycero-3-phospho-(1D-myo-inositol-3-phosphate) + ATP = a 1,2-diacyl-sn-glycero-3-phospho-(1D-myo-inositol-3,5-bisphosphate) + ADP + H(+). The PI(3,5)P2 regulatory complex regulates both the synthesis and turnover of phosphatidylinositol 3,5-bisphosphate (PtdIns(3,5)P2). Catalyzes the phosphorylation of phosphatidylinositol 3-phosphate on the fifth hydroxyl of the myo-inositol ring, to form phosphatidylinositol 3,5-bisphosphate. Plays an important role in maintenance of endomembrane homeostasis including endocytosis, vacuole formation, and vacuolar acidification processes. Required for development of viable pollen. Might mediate recycling of auxin transporters. In Arabidopsis thaliana (Mouse-ear cress), this protein is 1-phosphatidylinositol-3-phosphate 5-kinase FAB1A (FAB1A).